The sequence spans 678 residues: NADPH--cytochrome P450 reductase (678 aa).

Gly2 carries the post-translational modification N-acetylglycine. Topologically, residues 2 to 21 (GDSHVDTGATSTEAVAEEVS) are lumenal. The chain crosses the membrane as a helical span at residues 22-42 (LFSMTDMILLSVLVGFLTYFF). The Cytoplasmic portion of the chain corresponds to 43–678 (LFRKKKEEIP…KGRYSLDVWS (636 aa)). Ser63 is modified (phosphoserine). In terms of domain architecture, Flavodoxin-like spans 80–224 (IIVFYGSQTG…DFITWREQFW (145 aa)). FMN is bound by residues 86–91 (SQTGTA), 138–141 (ATYG), 173–182 (LGNKTYEHFN), and Asp208. Positions 279-521 (KNPFLAAVTT…FVRKSQFRLP (243 aa)) constitute an FAD-binding FR-type domain. Arg298 serves as a coordination point for NADP(+). FAD is bound by residues Arg424, 454 to 457 (RYYS), 472 to 474 (CAV), Tyr478, and 488 to 491 (GVAT). NADP(+) is bound by residues Thr535, 596–597 (SR), 602–606 (KVYVQ), and Asp639. Trp677 contributes to the FAD binding site.

Belongs to the NADPH--cytochrome P450 reductase family. This sequence in the N-terminal section; belongs to the flavodoxin family. The protein in the C-terminal section; belongs to the flavoprotein pyridine nucleotide cytochrome reductase family. FAD serves as cofactor. Requires FMN as cofactor.

Its subcellular location is the endoplasmic reticulum membrane. The catalysed reaction is 2 oxidized [cytochrome P450] + NADPH = 2 reduced [cytochrome P450] + NADP(+) + H(+). This enzyme is required for electron transfer from NADP to cytochrome P450 in microsomes. It can also provide electron transfer to heme oxygenase and cytochrome B5. This is NADPH--cytochrome P450 reductase from Cavia porcellus (Guinea pig).